The chain runs to 426 residues: 4-aminobutyrate aminotransferase GabT (426 aa).

Pyridoxal 5'-phosphate-binding positions include 111 to 112 (GS) and Gln-242. Lys-268 is subject to N6-(pyridoxal phosphate)lysine. Thr-297 provides a ligand contact to pyridoxal 5'-phosphate.

The protein belongs to the class-III pyridoxal-phosphate-dependent aminotransferase family. In terms of assembly, homotetramer. The cofactor is pyridoxal 5'-phosphate.

The enzyme catalyses 4-aminobutanoate + 2-oxoglutarate = succinate semialdehyde + L-glutamate. It catalyses the reaction 5-aminopentanoate + 2-oxoglutarate = 5-oxopentanoate + L-glutamate. It functions in the pathway amino-acid degradation; 4-aminobutanoate degradation. It participates in amino-acid degradation. In terms of biological role, pyridoxal phosphate-dependent enzyme that catalyzes transamination between primary amines and alpha-keto acids. Catalyzes the transfer of the amino group from gamma-aminobutyrate (GABA) to alpha-ketoglutarate (KG) to yield succinic semialdehyde (SSA) and glutamate. Thereby functions in a GABA degradation pathway that allows some E.coli strains to utilize GABA as a nitrogen source for growth. Also catalyzes the conversion of 5-aminovalerate to glutarate semialdehyde, as part of a L-lysine degradation pathway that proceeds via cadaverine, glutarate and L-2-hydroxyglutarate. This chain is 4-aminobutyrate aminotransferase GabT (gabT), found in Escherichia coli (strain K12).